A 473-amino-acid chain; its full sequence is Photosystem II CP43 reaction center protein (473 aa).

Residues 1-14 (MKTLYSLRRFYHVE) constitute a propeptide that is removed on maturation. An N-acetylthreonine modification is found at threonine 15. Position 15 is a phosphothreonine (threonine 15). 5 helical membrane passes run 69-93 (LFEVAHFVPEKPMYEQGLILLPHLA), 134-155 (LLGPETLEESFPFFGYVWKDRN), 178-200 (KALYFGGVYDTWAPGGGDVRKIT), 255-275 (KPFAWARRALVWSGEAYLSYS), and 291-312 (WFNNTAYPSEFYGPTGPEASQA). A [CaMn4O5] cluster-binding site is contributed by glutamate 367. The chain crosses the membrane as a helical span at residues 447 to 471 (RARAAAAGFEKGIDRDFEPVLSMTP).

The protein belongs to the PsbB/PsbC family. PsbC subfamily. As to quaternary structure, PSII is composed of 1 copy each of membrane proteins PsbA, PsbB, PsbC, PsbD, PsbE, PsbF, PsbH, PsbI, PsbJ, PsbK, PsbL, PsbM, PsbT, PsbX, PsbY, PsbZ, Psb30/Ycf12, at least 3 peripheral proteins of the oxygen-evolving complex and a large number of cofactors. It forms dimeric complexes. It depends on Binds multiple chlorophylls and provides some of the ligands for the Ca-4Mn-5O cluster of the oxygen-evolving complex. It may also provide a ligand for a Cl- that is required for oxygen evolution. PSII binds additional chlorophylls, carotenoids and specific lipids. as a cofactor.

It localises to the plastid. Its subcellular location is the chloroplast thylakoid membrane. In terms of biological role, one of the components of the core complex of photosystem II (PSII). It binds chlorophyll and helps catalyze the primary light-induced photochemical processes of PSII. PSII is a light-driven water:plastoquinone oxidoreductase, using light energy to abstract electrons from H(2)O, generating O(2) and a proton gradient subsequently used for ATP formation. The sequence is that of Photosystem II CP43 reaction center protein from Draba nemorosa (Woodland whitlowgrass).